The following is a 108-amino-acid chain: UPF0060 membrane protein Ent638_1931 (108 aa).

Transmembrane regions (helical) follow at residues Leu-6–Leu-26, Gly-29–Leu-49, Ala-61–Val-81, and Ala-85–Trp-105.

It belongs to the UPF0060 family.

Its subcellular location is the cell inner membrane. This chain is UPF0060 membrane protein Ent638_1931, found in Enterobacter sp. (strain 638).